Reading from the N-terminus, the 511-residue chain is Xylose import ATP-binding protein XylG (511 aa).

2 ABC transporter domains span residues 6 to 244 and 261 to 506; these read LEMR…VGRE and FEAR…IGKP. Position 38–45 (38–45) interacts with ATP; that stretch reads GENGAGKS.

Belongs to the ABC transporter superfamily. Xylose importer (TC 3.A.1.2.4) family. The complex is composed of two ATP-binding proteins (XylG), two transmembrane proteins (XylH) and a solute-binding protein (XylF).

The protein localises to the cell inner membrane. The enzyme catalyses D-xylose(out) + ATP + H2O = D-xylose(in) + ADP + phosphate + H(+). Part of the ABC transporter complex XylFGH involved in xylose import. Responsible for energy coupling to the transport system. The protein is Xylose import ATP-binding protein XylG of Brucella abortus (strain 2308).